We begin with the raw amino-acid sequence, 131 residues long: Structural protein ORF131 (131 aa).

This sequence belongs to the viral ORF131/RIP family.

The protein localises to the virion. The protein is Structural protein ORF131 of Acidianus convivator (ATV).